Here is a 396-residue protein sequence, read N- to C-terminus: 1-deoxy-D-xylulose 5-phosphate reductoisomerase (396 aa).

NADPH is bound by residues Thr-15, Gly-16, Ser-17, Ile-18, Gly-41, and Asn-129. Lys-130 serves as a coordination point for 1-deoxy-D-xylulose 5-phosphate. Position 131 (Glu-131) interacts with NADPH. Residue Asp-155 participates in Mn(2+) binding. Positions 156, 157, 182, and 205 each coordinate 1-deoxy-D-xylulose 5-phosphate. Glu-157 provides a ligand contact to Mn(2+). Gly-211 is a binding site for NADPH. 1-deoxy-D-xylulose 5-phosphate is bound by residues Ser-218, Asn-223, Lys-224, and Glu-227. Glu-227 contacts Mn(2+).

The protein belongs to the DXR family. It depends on Mg(2+) as a cofactor. The cofactor is Mn(2+).

The catalysed reaction is 2-C-methyl-D-erythritol 4-phosphate + NADP(+) = 1-deoxy-D-xylulose 5-phosphate + NADPH + H(+). The protein operates within isoprenoid biosynthesis; isopentenyl diphosphate biosynthesis via DXP pathway; isopentenyl diphosphate from 1-deoxy-D-xylulose 5-phosphate: step 1/6. In terms of biological role, catalyzes the NADPH-dependent rearrangement and reduction of 1-deoxy-D-xylulose-5-phosphate (DXP) to 2-C-methyl-D-erythritol 4-phosphate (MEP). The sequence is that of 1-deoxy-D-xylulose 5-phosphate reductoisomerase from Xanthomonas campestris pv. campestris (strain 8004).